The sequence spans 78 residues: Small ribosomal subunit protein bS16c (78 aa).

The protein belongs to the bacterial ribosomal protein bS16 family.

The protein localises to the plastid. It localises to the chloroplast. The sequence is that of Small ribosomal subunit protein bS16c from Chara vulgaris (Common stonewort).